Here is a 126-residue protein sequence, read N- to C-terminus: Histone H2B 1.2 (126 aa).

Residues 1-12 (MPEPAKSAPAPK) show a composition bias toward low complexity. The disordered stretch occupies residues 1 to 35 (MPEPAKSAPAPKKGSKKAVTKTPKKDGKKRRKSRK). Residues lysine 6 and lysine 13 each carry the N6-acetyllysine modification. Serine 15 bears the Phosphoserine mark. N6-acetyllysine occurs at positions 16 and 21. A glycan (O-linked (GlcNAc) serine) is linked at serine 113. Residue lysine 121 forms a Glycyl lysine isopeptide (Lys-Gly) (interchain with G-Cter in ubiquitin) linkage.

It belongs to the histone H2B family. In terms of assembly, the nucleosome is a histone octamer containing two molecules each of H2A, H2B, H3 and H4 assembled in one H3-H4 heterotetramer and two H2A-H2B heterodimers. The octamer wraps approximately 147 bp of DNA. In terms of processing, monoubiquitination of Lys-121 by BRE1 gives a specific tag for epigenetic transcriptional activation and is also prerequisite for histone H3 'Lys-4' and 'Lys-79' methylation. Phosphorylated on Ser-15 during developmentally programmed apoptosis; which may facilitate apoptotic chromatin condensation. Post-translationally, glcNAcylation at Ser-113 promotes monoubiquitination of Lys-121. It fluctuates in response to extracellular glucose, and associates with transcribed genes.

Its subcellular location is the nucleus. The protein localises to the chromosome. Functionally, core component of nucleosome. Nucleosomes wrap and compact DNA into chromatin, limiting DNA accessibility to the cellular machineries which require DNA as a template. Histones thereby play a central role in transcription regulation, DNA repair, DNA replication and chromosomal stability. DNA accessibility is regulated via a complex set of post-translational modifications of histones, also called histone code, and nucleosome remodeling. This is Histone H2B 1.2 from Xenopus laevis (African clawed frog).